A 198-amino-acid polypeptide reads, in one-letter code: Peptidyl-tRNA hydrolase (198 aa).

Tyr18 is a tRNA binding site. His23 serves as the catalytic Proton acceptor. TRNA-binding residues include Tyr69, Asn71, and Asn117.

It belongs to the PTH family. In terms of assembly, monomer.

It is found in the cytoplasm. The enzyme catalyses an N-acyl-L-alpha-aminoacyl-tRNA + H2O = an N-acyl-L-amino acid + a tRNA + H(+). Functionally, hydrolyzes ribosome-free peptidyl-tRNAs (with 1 or more amino acids incorporated), which drop off the ribosome during protein synthesis, or as a result of ribosome stalling. Its function is as follows. Catalyzes the release of premature peptidyl moieties from peptidyl-tRNA molecules trapped in stalled 50S ribosomal subunits, and thus maintains levels of free tRNAs and 50S ribosomes. This Aeromonas hydrophila subsp. hydrophila (strain ATCC 7966 / DSM 30187 / BCRC 13018 / CCUG 14551 / JCM 1027 / KCTC 2358 / NCIMB 9240 / NCTC 8049) protein is Peptidyl-tRNA hydrolase.